Here is a 512-residue protein sequence, read N- to C-terminus: ETS translocation variant 3 (512 aa).

The segment at residues 35-116 (IQLWHFILEL…KGKRFTYKFN (82 aa)) is a DNA-binding region (ETS). A disordered region spans residues 136-222 (VPQSAPPVPT…NAIGGGGIGH (87 aa)). A phosphoserine mark is found at serine 139, serine 159, and serine 315. A compositionally biased stretch (polar residues) spans 158 to 184 (HSPTNDVQPGRFSASSLTASGQESSNG). The interval 336–512 (PEESTQFSIK…QGLATAAADA (177 aa)) is disordered. Residues 380-406 (IKVEPASEKDPESLRQSAREKEEHTQE) are compositionally biased toward basic and acidic residues. Lysine 381 is covalently cross-linked (Glycyl lysine isopeptide (Lys-Gly) (interchain with G-Cter in SUMO2)). Position 388 is an N6-acetyllysine; alternate (lysine 388). A Glycyl lysine isopeptide (Lys-Gly) (interchain with G-Cter in SUMO2); alternate cross-link involves residue lysine 388. Acidic residues predominate over residues 443–452 (EPLEVTEDIE). 2 stretches are compositionally biased toward basic and acidic residues: residues 453 to 468 (DRPGKEPSAPEKKEDA) and 479 to 491 (RWNDDPEARELSK).

The protein belongs to the ETS family.

The protein resides in the nucleus. Transcriptional repressor that contribute to growth arrest during terminal macrophage differentiation by repressing target genes involved in Ras-dependent proliferation. Represses MMP1 promoter activity. In Pan troglodytes (Chimpanzee), this protein is ETS translocation variant 3 (ETV3).